Reading from the N-terminus, the 463-residue chain is ATP synthase subunit beta (463 aa).

152-159 (GGAGVGKT) is a binding site for ATP.

The protein belongs to the ATPase alpha/beta chains family. In terms of assembly, F-type ATPases have 2 components, CF(1) - the catalytic core - and CF(0) - the membrane proton channel. CF(1) has five subunits: alpha(3), beta(3), gamma(1), delta(1), epsilon(1). CF(0) has three main subunits: a(1), b(2) and c(9-12). The alpha and beta chains form an alternating ring which encloses part of the gamma chain. CF(1) is attached to CF(0) by a central stalk formed by the gamma and epsilon chains, while a peripheral stalk is formed by the delta and b chains.

It localises to the cell membrane. It catalyses the reaction ATP + H2O + 4 H(+)(in) = ADP + phosphate + 5 H(+)(out). In terms of biological role, produces ATP from ADP in the presence of a proton gradient across the membrane. The catalytic sites are hosted primarily by the beta subunits. The polypeptide is ATP synthase subunit beta (Clostridium botulinum (strain Alaska E43 / Type E3)).